The sequence spans 298 residues: Arginase (298 aa).

4 residues coordinate Mn(2+): H98, D121, H123, and D125. Substrate contacts are provided by residues 123–127 (HGDLN), 134–136 (SGN), and D177. The Mn(2+) site is built by D225 and D227. Positions 239 and 270 each coordinate substrate.

This sequence belongs to the arginase family. Mn(2+) serves as cofactor.

It carries out the reaction L-arginine + H2O = urea + L-ornithine. The protein operates within nitrogen metabolism; urea cycle; L-ornithine and urea from L-arginine: step 1/1. In Brevibacillus brevis (Bacillus brevis), this protein is Arginase (rocF).